Consider the following 309-residue polypeptide: HPr kinase/phosphorylase (309 aa).

Catalysis depends on residues H138 and K159. 153–160 (GQSGVGKS) is a binding site for ATP. Residue S160 coordinates Mg(2+). The active-site Proton acceptor; for phosphorylation activity. Proton donor; for dephosphorylation activity is the D177. Positions 201–210 (LEIRGLGIIN) are important for the catalytic mechanism of both phosphorylation and dephosphorylation. E202 is a binding site for Mg(2+). R243 is a catalytic residue. Residues 264–269 (PVRPGR) form an important for the catalytic mechanism of dephosphorylation region.

It belongs to the HPrK/P family. Homohexamer. It depends on Mg(2+) as a cofactor.

The enzyme catalyses [HPr protein]-L-serine + ATP = [HPr protein]-O-phospho-L-serine + ADP + H(+). It catalyses the reaction [HPr protein]-O-phospho-L-serine + phosphate + H(+) = [HPr protein]-L-serine + diphosphate. Functionally, catalyzes the ATP- as well as the pyrophosphate-dependent phosphorylation of a specific serine residue in HPr, a phosphocarrier protein of the phosphoenolpyruvate-dependent sugar phosphotransferase system (PTS). HprK/P also catalyzes the pyrophosphate-producing, inorganic phosphate-dependent dephosphorylation (phosphorolysis) of seryl-phosphorylated HPr (P-Ser-HPr). The two antagonistic activities of HprK/P are regulated by several intracellular metabolites, which change their concentration in response to the absence or presence of rapidly metabolisable carbon sources (glucose, fructose, etc.) in the growth medium. Also phosphorylates/dephosphorylates the HPr-like catabolite repression protein crh on a specific serine residue. Therefore, by controlling the phosphorylation state of HPr and crh, HPrK/P is a sensor enzyme that plays a major role in the regulation of carbon metabolism and sugar transport: it mediates carbon catabolite repression (CCR), and regulates PTS-catalyzed carbohydrate uptake and inducer exclusion. In Bacillus cereus (strain G9842), this protein is HPr kinase/phosphorylase.